The chain runs to 471 residues: Ammonium transporter Rh type B (471 aa).

Residues 1–13 lie on the Cytoplasmic side of the membrane; that stretch reads MAGSPSRAAGRRL. A helical transmembrane segment spans residues 14–33; the sequence is QLPLLSFLQGATAVLFAVFV. Over 34-60 the chain is Extracellular; it reads RYNHKTDAALWHRGNHSNADNEFYFRY. A glycan (N-linked (GlcNAc...) asparagine) is linked at Asn48. Residues 61–81 traverse the membrane as a helical segment; that stretch reads PSFQDVHAMVFVGFGFLMVFL. At 82-85 the chain is on the cytoplasmic side; sequence QRYG. A helical membrane pass occupies residues 86-106; the sequence is FSSVGFTFLLAAFALQWSTLV. Over 107–123 the chain is Extracellular; it reads QGFLHSFHGGHIHVGVE. Residues 124-144 traverse the membrane as a helical segment; sequence SMINADFCAGAVLISFGAVLG. Over 145–148 the chain is Cytoplasmic; it reads KTGP. A helical transmembrane segment spans residues 149–169; sequence AQLLLMALLEVVLFGINEFVL. Residues 170–177 are Extracellular-facing; it reads LHLLGVRD. The helical transmembrane segment at 178 to 200 threads the bilayer; it reads AGGSMTIHTFGAYFGLVLSQVLY. The Cytoplasmic portion of the chain corresponds to 201–217; that stretch reads RPQLEKSKHRQGLYHSD. The helical transmembrane segment at 218-238 threads the bilayer; it reads LFAMIGTIFLWIFWPSFNAAL. The Extracellular portion of the chain corresponds to 239–249; it reads TSLGAGQHRTA. A helical transmembrane segment spans residues 250-270; sequence LNTYYSLAASTLGTFALSALV. Over 271-280 the chain is Cytoplasmic; sequence GEDGRLDMVH. A helical membrane pass occupies residues 281-301; that stretch reads IQNAALAGRVVVGTSSEMMLT. Position 302 (Pro302) is a topological domain, extracellular. A helical transmembrane segment spans residues 303–323; sequence FGALAAGFLAGTVSTLGYKFF. Residues 324–344 are Cytoplasmic-facing; the sequence is TPILESKFKVQDTCGVHNLHG. The helical transmembrane segment at 345 to 365 threads the bilayer; the sequence is MPGVLGVLLGVLVAGLATHEA. The Extracellular segment spans residues 366 to 391; it reads YGDGLESVFPLIAEGQRSATSQAMYQ. The helical transmembrane segment at 392–412 threads the bilayer; the sequence is LFGLFVTLMFASVGGGLGGLL. Topologically, residues 413 to 471 are cytoplasmic; it reads LKLPFLDSPPDSQCYEDQVHWQAPGATLSPLPTPAFQVPGEHEDKAQRPLRVEEADTQA. The tract at residues 414–422 is interaction with ANK3; the sequence is KLPFLDSPP. A Basolateral sorting signal motif is present at residues 427–430; the sequence is YEDQ. The tract at residues 437–471 is disordered; sequence GATLSPLPTPAFQVPGEHEDKAQRPLRVEEADTQA. Over residues 452–471 the composition is skewed to basic and acidic residues; sequence GEHEDKAQRPLRVEEADTQA.

Belongs to the ammonium transporter (TC 2.A.49) family. Rh subfamily. In terms of assembly, interacts (via C-terminus) with ANK2 and ANK3; required for targeting to the basolateral membrane. N-glycosylated.

It is found in the cell membrane. The protein resides in the basolateral cell membrane. The catalysed reaction is NH4(+)(in) = NH4(+)(out). It carries out the reaction methylamine(out) = methylamine(in). The enzyme catalyses CO2(out) = CO2(in). In terms of biological role, ammonium transporter involved in the maintenance of acid-base homeostasis. Transports ammonium and its related derivative methylammonium across the basolateral plasma membrane of epithelial cells likely contributing to renal transepithelial ammonia transport and ammonia metabolism. May transport either NH4(+) or NH3 ammonia species predominantly mediating an electrogenic NH4(+) transport. May act as a CO2 channel providing for renal acid secretion. In Pongo pygmaeus (Bornean orangutan), this protein is Ammonium transporter Rh type B (RHBG).